The following is a 198-amino-acid chain: DNA polymerase zeta subunit 2 (198 aa).

The region spanning 4–196 (EIKADIIVEA…DLGLKMDVLI (193 aa)) is the HORMA domain.

This sequence belongs to the MAD2 family. As to quaternary structure, accessory subunit of the zeta DNA polymerase complex, which consists of the catalytic component PolZ1/DNApol-zeta and PolZ2/Rev7. Interacts with the apurinic/apyrimidinic (AP) endonuclease Rrp1 (via the N-terminus).

Functionally, as the accessory component of the DNA polymerase zeta complex, involved in translesion DNA synthesis (TLS) and various DNA repair mechanisms. Promotes the apurinic/apyrimidinic (AP) endonuclease activity of Rrp1 and is therefore likely to be involved in the base excision repair (BER) pathway responsible for repair of DNA lesions. It does not appear to influence the synthesis activity of the catalytic component Dmpol-zeta. The chain is DNA polymerase zeta subunit 2 from Drosophila melanogaster (Fruit fly).